We begin with the raw amino-acid sequence, 2176 residues long: Methyl-CpG-binding domain-containing protein 9 (2176 aa).

Residues methionine 1 to aspartate 13 are compositionally biased toward polar residues. 2 disordered regions span residues methionine 1–lysine 20 and glycine 28–serine 85. A PHD-type 1 zinc finger spans residues aspartate 83–glycine 133. Residues cysteine 86–arginine 131 form an RING-type 1; degenerate zinc finger. The MBD domain maps to arginine 258–serine 327. Positions glycine 403–glycine 456 constitute an FYR N-terminal domain. Positions glutamate 491–alanine 511 form a coiled coil. The region spanning serine 550–lysine 698 is the FYR C-terminal domain. Short sequence motifs (nuclear localization signal) lie at residues serine 914–aspartate 921, lysine 1124–valine 1131, and tyrosine 1256–serine 1263. A Pumilio repeat occupies proline 1098 to lysine 1137. Positions serine 1130–glutamate 1245 constitute a Bromo domain. A coiled-coil region spans residues glutamine 1251–isoleucine 1273. Residues glutamate 1287–alanine 1337 form a PHD-type 2 zinc finger. An RING-type 2; degenerate zinc finger spans residues cysteine 1290–valine 1335. The Nuclear localization signal signature appears at alanine 1337–alanine 1344. Positions glutamine 1410–lysine 1437 form a coiled coil. Disordered stretches follow at residues glycine 1472 to glutamate 1553 and glycine 1565 to glutamine 1595. Composition is skewed to polar residues over residues serine 1492–glycine 1513, lysine 1523–serine 1532, and aspartate 1585–glutamine 1595. Residues serine 1588–arginine 1628 are a coiled coil. A Nuclear localization signal motif is present at residues glutamate 1761 to isoleucine 1768. The interval isoleucine 2136–serine 2176 is disordered.

Interacts with histone H4. As to expression, expressed in leaves, buds, flowers and stems.

It is found in the nucleus. The enzyme catalyses L-lysyl-[protein] + acetyl-CoA = N(6)-acetyl-L-lysyl-[protein] + CoA + H(+). Its function is as follows. Probable transcriptional regulator that acts as a histone acetyltransferase. Mediates the acetylation of histone H3 and H4 of target loci (e.g. FLC). Involved in an auxin-independent regulation of shoot branching and flowering time. This chain is Methyl-CpG-binding domain-containing protein 9 (MBD9), found in Arabidopsis thaliana (Mouse-ear cress).